A 545-amino-acid polypeptide reads, in one-letter code: CTP synthase (545 aa).

Residues 1–266 are amidoligase domain; that stretch reads MTTRYIFVTG…DDLVVKRFGL (266 aa). Ser-14 provides a ligand contact to CTP. Ser-14 serves as a coordination point for UTP. ATP contacts are provided by residues 15–20 and Asp-72; that span reads SLGKGI. Asp-72 and Glu-140 together coordinate Mg(2+). Residues 147-149, 187-192, and Lys-223 contribute to the CTP site; these read DIE and KTKPTQ. Residues 187–192 and Lys-223 each bind UTP; that span reads KTKPTQ. 239 to 241 contacts ATP; the sequence is KDV. One can recognise a Glutamine amidotransferase type-1 domain in the interval 291–542; that stretch reads VIGMVGKYIE…IAAASAHQKR (252 aa). Position 352 (Gly-352) interacts with L-glutamine. The active-site Nucleophile; for glutamine hydrolysis is Cys-379. Residues 380–383, Glu-403, and Arg-470 each bind L-glutamine; that span reads LGMQ. Residues His-515 and Glu-517 contribute to the active site.

The protein belongs to the CTP synthase family. As to quaternary structure, homotetramer.

The enzyme catalyses UTP + L-glutamine + ATP + H2O = CTP + L-glutamate + ADP + phosphate + 2 H(+). The catalysed reaction is L-glutamine + H2O = L-glutamate + NH4(+). It catalyses the reaction UTP + NH4(+) + ATP = CTP + ADP + phosphate + 2 H(+). The protein operates within pyrimidine metabolism; CTP biosynthesis via de novo pathway; CTP from UDP: step 2/2. Allosterically activated by GTP, when glutamine is the substrate; GTP has no effect on the reaction when ammonia is the substrate. The allosteric effector GTP functions by stabilizing the protein conformation that binds the tetrahedral intermediate(s) formed during glutamine hydrolysis. Inhibited by the product CTP, via allosteric rather than competitive inhibition. Catalyzes the ATP-dependent amination of UTP to CTP with either L-glutamine or ammonia as the source of nitrogen. Regulates intracellular CTP levels through interactions with the four ribonucleotide triphosphates. This is CTP synthase from Shewanella baltica (strain OS155 / ATCC BAA-1091).